The sequence spans 234 residues: tRNA (guanine-N(1)-)-methyltransferase (234 aa).

Residues Gly115 and Val135–Leu140 each bind S-adenosyl-L-methionine.

It belongs to the RNA methyltransferase TrmD family. Homodimer.

Its subcellular location is the cytoplasm. It carries out the reaction guanosine(37) in tRNA + S-adenosyl-L-methionine = N(1)-methylguanosine(37) in tRNA + S-adenosyl-L-homocysteine + H(+). Functionally, specifically methylates guanosine-37 in various tRNAs. The protein is tRNA (guanine-N(1)-)-methyltransferase of Rickettsia rickettsii (strain Iowa).